Consider the following 179-residue polypeptide: ATP synthase subunit delta (179 aa).

This sequence belongs to the ATPase delta chain family. As to quaternary structure, F-type ATPases have 2 components, F(1) - the catalytic core - and F(0) - the membrane proton channel. F(1) has five subunits: alpha(3), beta(3), gamma(1), delta(1), epsilon(1). F(0) has three main subunits: a(1), b(2) and c(10-14). The alpha and beta chains form an alternating ring which encloses part of the gamma chain. F(1) is attached to F(0) by a central stalk formed by the gamma and epsilon chains, while a peripheral stalk is formed by the delta and b chains.

The protein resides in the cell membrane. In terms of biological role, f(1)F(0) ATP synthase produces ATP from ADP in the presence of a proton or sodium gradient. F-type ATPases consist of two structural domains, F(1) containing the extramembraneous catalytic core and F(0) containing the membrane proton channel, linked together by a central stalk and a peripheral stalk. During catalysis, ATP synthesis in the catalytic domain of F(1) is coupled via a rotary mechanism of the central stalk subunits to proton translocation. Functionally, this protein is part of the stalk that links CF(0) to CF(1). It either transmits conformational changes from CF(0) to CF(1) or is implicated in proton conduction. The chain is ATP synthase subunit delta from Bacillus sp. (strain PS3).